A 420-amino-acid polypeptide reads, in one-letter code: Putative kinase Y4mE (420 aa).

The active-site Proton acceptor is the aspartate 302.

It belongs to the HipA Ser/Thr kinase family.

The protein is Putative kinase Y4mE of Sinorhizobium fredii (strain NBRC 101917 / NGR234).